A 506-amino-acid chain; its full sequence is Glycine--tRNA ligase (506 aa).

Arginine 99 and glutamate 189 together coordinate substrate. Residues 221-223, 231-236, 305-306, and 364-367 each bind ATP; these read RNE, FRVREF, EL, and GVDR. 236-240 contributes to the substrate binding site; that stretch reads FEQME. Position 360–364 (360–364) interacts with substrate; it reads EPSAG.

This sequence belongs to the class-II aminoacyl-tRNA synthetase family. In terms of assembly, homodimer.

The protein resides in the cytoplasm. It carries out the reaction tRNA(Gly) + glycine + ATP = glycyl-tRNA(Gly) + AMP + diphosphate. In terms of biological role, catalyzes the attachment of glycine to tRNA(Gly). The sequence is that of Glycine--tRNA ligase from Thermus thermophilus (strain ATCC BAA-163 / DSM 7039 / HB27).